The following is a 478-amino-acid chain: Aspartyl/glutamyl-tRNA(Asn/Gln) amidotransferase subunit B 2 (478 aa).

Belongs to the GatB/GatE family. GatB subfamily. Heterotrimer of A, B and C subunits.

It carries out the reaction L-glutamyl-tRNA(Gln) + L-glutamine + ATP + H2O = L-glutaminyl-tRNA(Gln) + L-glutamate + ADP + phosphate + H(+). It catalyses the reaction L-aspartyl-tRNA(Asn) + L-glutamine + ATP + H2O = L-asparaginyl-tRNA(Asn) + L-glutamate + ADP + phosphate + 2 H(+). In terms of biological role, allows the formation of correctly charged Asn-tRNA(Asn) or Gln-tRNA(Gln) through the transamidation of misacylated Asp-tRNA(Asn) or Glu-tRNA(Gln) in organisms which lack either or both of asparaginyl-tRNA or glutaminyl-tRNA synthetases. The reaction takes place in the presence of glutamine and ATP through an activated phospho-Asp-tRNA(Asn) or phospho-Glu-tRNA(Gln). This is Aspartyl/glutamyl-tRNA(Asn/Gln) amidotransferase subunit B 2 (gatB2) from Clostridium acetobutylicum (strain ATCC 824 / DSM 792 / JCM 1419 / IAM 19013 / LMG 5710 / NBRC 13948 / NRRL B-527 / VKM B-1787 / 2291 / W).